A 122-amino-acid chain; its full sequence is Large ribosomal subunit protein uL14 (122 aa).

Belongs to the universal ribosomal protein uL14 family. Part of the 50S ribosomal subunit. Forms a cluster with proteins L3 and L19. In the 70S ribosome, L14 and L19 interact and together make contacts with the 16S rRNA in bridges B5 and B8.

Functionally, binds to 23S rRNA. Forms part of two intersubunit bridges in the 70S ribosome. This chain is Large ribosomal subunit protein uL14, found in Geobacter sulfurreducens (strain ATCC 51573 / DSM 12127 / PCA).